The following is a 607-amino-acid chain: Elongation factor 4 (607 aa).

Positions 11 to 193 constitute a tr-type G domain; sequence SKIRNFSIIA…QIVEKVPAPA (183 aa). GTP contacts are provided by residues 23 to 28 and 140 to 143; these read DHGKST and NKID.

It belongs to the TRAFAC class translation factor GTPase superfamily. Classic translation factor GTPase family. LepA subfamily.

The protein localises to the cell membrane. It catalyses the reaction GTP + H2O = GDP + phosphate + H(+). In terms of biological role, required for accurate and efficient protein synthesis under certain stress conditions. May act as a fidelity factor of the translation reaction, by catalyzing a one-codon backward translocation of tRNAs on improperly translocated ribosomes. Back-translocation proceeds from a post-translocation (POST) complex to a pre-translocation (PRE) complex, thus giving elongation factor G a second chance to translocate the tRNAs correctly. Binds to ribosomes in a GTP-dependent manner. The polypeptide is Elongation factor 4 (Bacillus cereus (strain ATCC 14579 / DSM 31 / CCUG 7414 / JCM 2152 / NBRC 15305 / NCIMB 9373 / NCTC 2599 / NRRL B-3711)).